The chain runs to 429 residues: UDP-N-acetylglucosamine 1-carboxyvinyltransferase (429 aa).

22-23 (KN) contributes to the phosphoenolpyruvate binding site. Residue arginine 102 coordinates UDP-N-acetyl-alpha-D-glucosamine. The active-site Proton donor is cysteine 126. 2-(S-cysteinyl)pyruvic acid O-phosphothioketal is present on cysteine 126. UDP-N-acetyl-alpha-D-glucosamine-binding positions include 131-135 (RPVDL), aspartate 316, and isoleucine 338.

It belongs to the EPSP synthase family. MurA subfamily.

The protein localises to the cytoplasm. It carries out the reaction phosphoenolpyruvate + UDP-N-acetyl-alpha-D-glucosamine = UDP-N-acetyl-3-O-(1-carboxyvinyl)-alpha-D-glucosamine + phosphate. It functions in the pathway cell wall biogenesis; peptidoglycan biosynthesis. Its function is as follows. Cell wall formation. Adds enolpyruvyl to UDP-N-acetylglucosamine. In Methylorubrum populi (strain ATCC BAA-705 / NCIMB 13946 / BJ001) (Methylobacterium populi), this protein is UDP-N-acetylglucosamine 1-carboxyvinyltransferase.